The following is a 158-amino-acid chain: 2-C-methyl-D-erythritol 2,4-cyclodiphosphate synthase (158 aa).

Residues Asp9 and His11 each contribute to the a divalent metal cation site. 4-CDP-2-C-methyl-D-erythritol 2-phosphate contacts are provided by residues 9–11 (DVH) and 35–36 (HS). An a divalent metal cation-binding site is contributed by His43. 4-CDP-2-C-methyl-D-erythritol 2-phosphate contacts are provided by residues 57-59 (DIG), 62-66 (FPDTD), 133-136 (TTTE), Phe140, and Arg143.

Belongs to the IspF family. In terms of assembly, homotrimer. Requires a divalent metal cation as cofactor.

The enzyme catalyses 4-CDP-2-C-methyl-D-erythritol 2-phosphate = 2-C-methyl-D-erythritol 2,4-cyclic diphosphate + CMP. It functions in the pathway isoprenoid biosynthesis; isopentenyl diphosphate biosynthesis via DXP pathway; isopentenyl diphosphate from 1-deoxy-D-xylulose 5-phosphate: step 4/6. In terms of biological role, involved in the biosynthesis of isopentenyl diphosphate (IPP) and dimethylallyl diphosphate (DMAPP), two major building blocks of isoprenoid compounds. Catalyzes the conversion of 4-diphosphocytidyl-2-C-methyl-D-erythritol 2-phosphate (CDP-ME2P) to 2-C-methyl-D-erythritol 2,4-cyclodiphosphate (ME-CPP) with a corresponding release of cytidine 5-monophosphate (CMP). The sequence is that of 2-C-methyl-D-erythritol 2,4-cyclodiphosphate synthase from Haemophilus influenzae (strain PittEE).